The chain runs to 506 residues: Glycine--tRNA ligase (506 aa).

Substrate-binding residues include R99 and E189. ATP is bound by residues 221–223, 231–236, 306–307, and 365–368; these read RNE, FRVREL, EI, and GVDR. 236-240 contributes to the substrate binding site; sequence LEQME. 361–365 contacts substrate; it reads EPSAG.

The protein belongs to the class-II aminoacyl-tRNA synthetase family. As to quaternary structure, homodimer.

The protein resides in the cytoplasm. The catalysed reaction is tRNA(Gly) + glycine + ATP = glycyl-tRNA(Gly) + AMP + diphosphate. Its function is as follows. Catalyzes the attachment of glycine to tRNA(Gly). The sequence is that of Glycine--tRNA ligase from Deinococcus radiodurans (strain ATCC 13939 / DSM 20539 / JCM 16871 / CCUG 27074 / LMG 4051 / NBRC 15346 / NCIMB 9279 / VKM B-1422 / R1).